The sequence spans 298 residues: Arginine/serine-rich protein 1 (298 aa).

Residues 1-135 (MSSAAMSKYV…SRSRSRGRSQ (135 aa)) form a disordered region. The residue at position 17 (serine 17) is a Phosphoserine. The segment covering 23-36 (SPSTSGSGRSSRLS) has biased composition (low complexity). The span at 60–105 (SRSHSRPRRSRRSRSRSRRRHQRKYRRYSRSYSRSRSRSRSHRYHR) shows a compositional bias: basic residues. 2 positions are modified to phosphoserine: serine 118 and serine 120. Positions 124–135 (SRSRSRSRGRSQ) are enriched in basic residues. Arginine 145 carries the post-translational modification Omega-N-methylarginine. Disordered regions lie at residues 161–181 (RPRW…TPFR) and 218–298 (ASQG…WIPV). Over residues 219–228 (SQGTAVSSSG) the composition is skewed to polar residues. The span at 230-246 (KVEHSEKQTEDATKNTS) shows a compositional bias: basic and acidic residues. Positions 247–271 (EKSSTQRNIAFSSNNSVAKPLQKTT) are enriched in polar residues. Positions 274–289 (AVEEKSSGSPKIDKKK) are enriched in basic and acidic residues. Serine 282 carries the phosphoserine modification.

The protein belongs to the RSRP family. In terms of processing, phosphorylated. Phosphorylation at Ser-118 and Ser-120 mediates the interaction with spliceosome proteins.

The protein localises to the nucleus. Its function is as follows. Probably acts as a spliceosomal factor that contributes to spliceosome assembly and regulates the isoform switching of proteins such as PARP6. The protein is Arginine/serine-rich protein 1 (Rsrp1) of Mus musculus (Mouse).